The sequence spans 382 residues: uncharacterized protein (382 aa).

A run of 12 helical transmembrane segments spans residues 14 to 34 (GLLL…LWLA), 45 to 65 (MVSS…GYLI), 75 to 95 (YLAS…VGFW), 102 to 122 (FIAG…LMCS), 131 to 151 (LLAA…LLVS), 157 to 177 (LLHV…PLLF), 204 to 224 (LGVN…GLMP), 231 to 251 (GMAN…GILG), 270 to 290 (VQVF…AMAP), 291 to 311 (ALFI…AWAC), 325 to 345 (ALLL…AMLM), and 349 to 369 (SDNL…LMLL).

Belongs to the major facilitator superfamily. YcaD (TC 2.A.1.26) family.

Its subcellular location is the cell inner membrane. This is an uncharacterized protein from Salmonella paratyphi A (strain ATCC 9150 / SARB42).